Reading from the N-terminus, the 474-residue chain is Histone H2B.v2 (474 aa).

Disordered stretches follow at residues 99–123 (FNNG…QNEL), 276–295 (TTFT…ISGD), and 328–394 (FNDN…VNNN). Low complexity-rich tracts occupy residues 100-110 (NNGGNNNNNNE), 276-286 (TTFTQQEQQEQ), and 329-368 (NDNN…NNKN).

Belongs to the histone H2B family.

This chain is Histone H2B.v2 (H2Bv2), found in Dictyostelium discoideum (Social amoeba).